The chain runs to 207 residues: Large ribosomal subunit protein uL4 (207 aa).

Belongs to the universal ribosomal protein uL4 family. In terms of assembly, part of the 50S ribosomal subunit.

One of the primary rRNA binding proteins, this protein initially binds near the 5'-end of the 23S rRNA. It is important during the early stages of 50S assembly. It makes multiple contacts with different domains of the 23S rRNA in the assembled 50S subunit and ribosome. Its function is as follows. Forms part of the polypeptide exit tunnel. The polypeptide is Large ribosomal subunit protein uL4 (Rickettsia rickettsii (strain Iowa)).